The primary structure comprises 503 residues: MAGLSDLELRRELQALGFQPGPITDTTRDVYRNKLRRLRGEARLRDEERLREEARPRGEERLREEARLREDAPLRARPAAASPRAEPWLSQPASGSAYATPGAYGDIRPSAASWVGSRGLAYPARPAQLRRRASVRGSSEEDEDARTPDRATQGPGLAARRWWAASPAPARLPSSLLGPDPRPGLRATRAGPAGAARARPEVGRRLERWLSRLLLWASLGLLLVFLGILWVKMGKPSAPQEAEDNMKLLPVDCERKTDEFCQAKQKAALLELLHELYNFLAIQAGNFECGNPENLKSKCIPVMEAQEYIANVTSSSSAKFEAALTWILSSNKDVGIWLKGEDQSELVTTVDKVVCLESAHPRMGVGCRLSRALLTAVTNVLIFFWCLAFLWGLLILLKYRWRKLEEEEQAMYEMVKKIIDVVQDHYVDWEQDMERYPYVGILHVRDSLIPPQSRRRMKRVWDRAVEFLASNESRIQTESHRVAGEDMLVWRWTKPSSFSDSER.

N-acetylalanine is present on Ala-2. The 41-residue stretch at 2–42 folds into the LEM domain; the sequence is AGLSDLELRRELQALGFQPGPITDTTRDVYRNKLRRLRGEA. Positions 42–74 are enriched in basic and acidic residues; the sequence is ARLRDEERLREEARPRGEERLREEARLREDAPL. Disordered regions lie at residues 42–97 and 127–157; these read ARLR…SGSA and AQLR…GPGL. Positions 74 to 130 are required for nuclear retention and interaction with LMNA isoform C; it reads LRARPAAASPRAEPWLSQPASGSAYATPGAYGDIRPSAASWVGSRGLAYPARPAQLR. The segment covering 75 to 87 has biased composition (low complexity); the sequence is RARPAAASPRAEP. Residues Ser-166 and Ser-175 each carry the phosphoserine modification. The interval 172-198 is disordered; sequence LPSSLLGPDPRPGLRATRAGPAGAARA. Positions 184–197 are enriched in low complexity; that stretch reads GLRATRAGPAGAAR. Helical transmembrane passes span 213 to 233 and 377 to 397; these read LLLW…WVKM and VTNV…LILL. Positions 395-503 are winged-Helix (WH); that stretch reads ILLKYRWRKL…KPSSFSDSER (109 aa). Phosphoserine is present on residues Ser-497, Ser-499, and Ser-501.

As to quaternary structure, interacts (via N-terminus) with LMNA isoform C (via C-terminus) (in vitro). Interacts (via LEM domain) with BANF1. Interacts (via C-terminus) with CHMP7. Interacts (via N-terminus) with tubulin; the interaction causes microtubule bundling and stabilization (in vitro). Post-translationally, phosphorylated; strongly phosphorylated in mitosis compared to G1/S. Ubiquitously expressed, including bone marrow, brain, kidney, colon, skeletal muscle, thymus, testis and uterus.

Its subcellular location is the nucleus inner membrane. It localises to the nucleus envelope. It is found in the cytoplasm. The protein localises to the cytoskeleton. The protein resides in the spindle. Functionally, nuclear lamina-associated inner nuclear membrane protein that is involved in nuclear structure organization, maintenance of nuclear envelope (NE) integrity and NE reformation after mitosis. Plays a role as transmembrane adapter for the endosomal sorting complexes required for transport (ESCRT), and is thereby involved in ESCRT-mediated NE reformation. Promotes ESCRT-mediated NE closure by recruiting CHMP7 and downstream ESCRT-III proteins IST1/CHMP8 and CHMP2A to the reforming NE during anaphase. During nuclear reassembly, condenses into a liquid-like coating around microtubule spindles and coassembles with CHMP7 to form a macromolecular O-ring seal at the confluence between membranes, chromatin, and the spindle to facilitate early nuclear sealing. Plays a role in the organization of heterochromatin associated with the NE and in the maintenance of NE organization under mechanical stress. Required for embryonic development and involved in regulation of several signaling pathways such as MAPK and AKT. Required for myoblast differentiation involving regulation of ERK signaling. Essential for cardiac homeostasis and proper heart function. The chain is LEM domain-containing protein 2 (LEMD2) from Homo sapiens (Human).